The chain runs to 420 residues: Gamma-glutamyl phosphate reductase (420 aa).

This sequence belongs to the gamma-glutamyl phosphate reductase family.

Its subcellular location is the cytoplasm. The enzyme catalyses L-glutamate 5-semialdehyde + phosphate + NADP(+) = L-glutamyl 5-phosphate + NADPH + H(+). It functions in the pathway amino-acid biosynthesis; L-proline biosynthesis; L-glutamate 5-semialdehyde from L-glutamate: step 2/2. Catalyzes the NADPH-dependent reduction of L-glutamate 5-phosphate into L-glutamate 5-semialdehyde and phosphate. The product spontaneously undergoes cyclization to form 1-pyrroline-5-carboxylate. The protein is Gamma-glutamyl phosphate reductase of Streptococcus gordonii (strain Challis / ATCC 35105 / BCRC 15272 / CH1 / DL1 / V288).